We begin with the raw amino-acid sequence, 109 residues long: Mitochondrial pyruvate carrier 1 (109 aa).

Position 2 is an N-acetylalanine (A2). The Mitochondrial matrix portion of the chain corresponds to 2–20 (AGALVRKAADYVRSKDFRD). The helical transmembrane segment at 21 to 41 (YLMSTHFWGPVANWGLPIAAI) threads the bilayer. Topologically, residues 42–52 (NDMKKSPEIIS) are mitochondrial intermembrane. A helical membrane pass occupies residues 53–71 (GRMTFALCCYSLTFMRFAY). N6-acetyllysine is present on K72. Residues 72-109 (KVQPRNWLLFACHATNEVAQLIQGGRLIKHEMTKTASA) are Mitochondrial matrix-facing.

It belongs to the mitochondrial pyruvate carrier (MPC) (TC 2.A.105) family. In terms of assembly, homodimer. Forms heterodimer with MPC2. The heterodimer is the more stable and dominant form.

Its subcellular location is the mitochondrion inner membrane. The catalysed reaction is pyruvate(out) + H(+)(out) = pyruvate(in) + H(+)(in). In terms of biological role, mediates the uptake of pyruvate into mitochondria. This Homo sapiens (Human) protein is Mitochondrial pyruvate carrier 1 (MPC1).